Here is a 305-residue protein sequence, read N- to C-terminus: U6 small nuclear RNA (adenine-(43)-N(6))-methyltransferase (305 aa).

5 residues coordinate S-adenosyl-L-methionine: R85, G110, E133, S164, and N186. Residues 194–217 are disordered; the sequence is SPNPFGGNTRNPQRRPAPNNVRTG.

Belongs to the methyltransferase superfamily. METTL16/RlmF family.

The enzyme catalyses adenosine in U6 snRNA + S-adenosyl-L-methionine = N(6)-methyladenosine in U6 snRNA + S-adenosyl-L-homocysteine + H(+). RNA N6-methyltransferase that mediates N6-methylation of adenine of U6 small nuclear RNA (U6 snRNA). In Drosophila pseudoobscura pseudoobscura (Fruit fly), this protein is U6 small nuclear RNA (adenine-(43)-N(6))-methyltransferase.